The sequence spans 144 residues: Bacilliredoxin SSP1311 (144 aa).

This sequence belongs to the bacilliredoxin family.

This Staphylococcus saprophyticus subsp. saprophyticus (strain ATCC 15305 / DSM 20229 / NCIMB 8711 / NCTC 7292 / S-41) protein is Bacilliredoxin SSP1311.